A 213-amino-acid chain; its full sequence is Putative tRNA methyltransferase MPN_351 (213 aa).

It belongs to the TrmK family.

It localises to the cytoplasm. This Mycoplasma pneumoniae (strain ATCC 29342 / M129 / Subtype 1) (Mycoplasmoides pneumoniae) protein is Putative tRNA methyltransferase MPN_351.